A 263-amino-acid polypeptide reads, in one-letter code: 3-methyl-2-oxobutanoate hydroxymethyltransferase (263 aa).

Asp-45 and Asp-84 together coordinate Mg(2+). 3-methyl-2-oxobutanoate-binding positions include 45–46, Asp-84, and Lys-112; that span reads DS. Glu-114 contacts Mg(2+). The active-site Proton acceptor is the Glu-180.

This sequence belongs to the PanB family. Homodecamer; pentamer of dimers. The cofactor is Mg(2+).

It localises to the cytoplasm. It carries out the reaction 3-methyl-2-oxobutanoate + (6R)-5,10-methylene-5,6,7,8-tetrahydrofolate + H2O = 2-dehydropantoate + (6S)-5,6,7,8-tetrahydrofolate. The protein operates within cofactor biosynthesis; (R)-pantothenate biosynthesis; (R)-pantoate from 3-methyl-2-oxobutanoate: step 1/2. Its function is as follows. Catalyzes the reversible reaction in which hydroxymethyl group from 5,10-methylenetetrahydrofolate is transferred onto alpha-ketoisovalerate to form ketopantoate. In Salmonella enteritidis PT4 (strain P125109), this protein is 3-methyl-2-oxobutanoate hydroxymethyltransferase.